The sequence spans 153 residues: Transcriptional repressor NrdR (153 aa).

Residues 3–34 (CPYCNADDTKVIDSRLAAEGAQVRRRRQCNQC) fold into a zinc finger. Residues 49-139 (PRIIKSNGRI…VYRDFQDIEA (91 aa)) enclose the ATP-cone domain.

It belongs to the NrdR family. It depends on Zn(2+) as a cofactor.

Negatively regulates transcription of bacterial ribonucleotide reductase nrd genes and operons by binding to NrdR-boxes. The chain is Transcriptional repressor NrdR from Psychrobacter sp. (strain PRwf-1).